Here is a 365-residue protein sequence, read N- to C-terminus: Anhydro-N-acetylmuramic acid kinase (365 aa).

Position 9–16 (9–16) interacts with ATP; that stretch reads GTSLDGVD.

It belongs to the anhydro-N-acetylmuramic acid kinase family.

The catalysed reaction is 1,6-anhydro-N-acetyl-beta-muramate + ATP + H2O = N-acetyl-D-muramate 6-phosphate + ADP + H(+). The protein operates within amino-sugar metabolism; 1,6-anhydro-N-acetylmuramate degradation. It functions in the pathway cell wall biogenesis; peptidoglycan recycling. Catalyzes the specific phosphorylation of 1,6-anhydro-N-acetylmuramic acid (anhMurNAc) with the simultaneous cleavage of the 1,6-anhydro ring, generating MurNAc-6-P. Is required for the utilization of anhMurNAc either imported from the medium or derived from its own cell wall murein, and thus plays a role in cell wall recycling. This Zymomonas mobilis subsp. mobilis (strain ATCC 31821 / ZM4 / CP4) protein is Anhydro-N-acetylmuramic acid kinase.